The chain runs to 604 residues: Matrix metalloproteinase-21 (604 aa).

The signal sequence occupies residues 1-22 (MPSIKLLVWCCLCVISPRLCHS). A propeptide spanning residues 23 to 180 (EKLFHSRDRS…PDPPKIRRKR (158 aa)) is cleaved from the precursor. Positions 132–175 (KPRCGVPDNQMAKKETEKPTAAQSLENKTKDSENVTQQNPDPPK) are disordered. The Cysteine switch signature appears at 133–140 (PRCGVPDN). Zn(2+) is bound at residue cysteine 135. N-linked (GlcNAc...) asparagine glycans are attached at residues asparagine 158 and asparagine 165. Histidine 318 provides a ligand contact to Zn(2+). Glutamate 319 is an active-site residue. Zn(2+) is bound by residues histidine 322 and histidine 328. Cysteine 364 and cysteine 595 are disulfide-bonded. 4 Hemopexin repeats span residues 365 to 424 (EGPF…WHGI), 426 to 482 (VQNI…FPGI), 483 to 531 (PSPI…FPAV), and 538 to 594 (KGNI…WFDI). Residues asparagine 404 and asparagine 407 are each glycosylated (N-linked (GlcNAc...) asparagine).

Belongs to the peptidase M10A family. The cofactor is Zn(2+). Requires Ca(2+) as cofactor. Post-translationally, the precursor is cleaved by a furin endopeptidase.

It is found in the secreted. In terms of biological role, plays a specialized role in the generation of left-right asymmetry during embryogenesis. May act as a negative regulator of the NOTCH-signaling pathway. The chain is Matrix metalloproteinase-21 (mmp21) from Xenopus laevis (African clawed frog).